Reading from the N-terminus, the 421-residue chain is Ribulose bisphosphate carboxylase large chain (421 aa).

Substrate contacts are provided by N68 and T118. K120 serves as the catalytic Proton acceptor. K122 lines the substrate pocket. Mg(2+) contacts are provided by K146, D148, and E149. At K146 the chain carries N6-carboxylysine. The active-site Proton acceptor is the H239. 3 residues coordinate substrate: R240, H272, and S324.

It belongs to the RuBisCO large chain family. Type I subfamily. Heterohexadecamer of 8 large chains and 8 small chains; disulfide-linked. The disulfide link is formed within the large subunit homodimers. Requires Mg(2+) as cofactor. In terms of processing, the disulfide bond which can form in the large chain dimeric partners within the hexadecamer appears to be associated with oxidative stress and protein turnover.

It is found in the plastid. It localises to the chloroplast. It carries out the reaction 2 (2R)-3-phosphoglycerate + 2 H(+) = D-ribulose 1,5-bisphosphate + CO2 + H2O. The enzyme catalyses D-ribulose 1,5-bisphosphate + O2 = 2-phosphoglycolate + (2R)-3-phosphoglycerate + 2 H(+). Functionally, ruBisCO catalyzes two reactions: the carboxylation of D-ribulose 1,5-bisphosphate, the primary event in carbon dioxide fixation, as well as the oxidative fragmentation of the pentose substrate in the photorespiration process. Both reactions occur simultaneously and in competition at the same active site. The polypeptide is Ribulose bisphosphate carboxylase large chain (rbcL) (Aegilops tauschii (Tausch's goatgrass)).